A 427-amino-acid chain; its full sequence is Enolase 2 (427 aa).

A (2R)-2-phosphoglycerate-binding site is contributed by Gln165. Glu207 functions as the Proton donor in the catalytic mechanism. Positions 244, 287, and 314 each coordinate Mg(2+). (2R)-2-phosphoglycerate is bound by residues Lys339, Arg368, Ser369, and Lys390. Lys339 acts as the Proton acceptor in catalysis.

The protein belongs to the enolase family. As to quaternary structure, component of the RNA degradosome, a multiprotein complex involved in RNA processing and mRNA degradation. The cofactor is Mg(2+).

The protein resides in the cytoplasm. It localises to the secreted. Its subcellular location is the cell surface. It carries out the reaction (2R)-2-phosphoglycerate = phosphoenolpyruvate + H2O. It participates in carbohydrate degradation; glycolysis; pyruvate from D-glyceraldehyde 3-phosphate: step 4/5. Functionally, catalyzes the reversible conversion of 2-phosphoglycerate (2-PG) into phosphoenolpyruvate (PEP). It is essential for the degradation of carbohydrates via glycolysis. The sequence is that of Enolase 2 from Pseudomonas syringae pv. syringae (strain B728a).